Consider the following 80-residue polypeptide: MARASEKGEEKKQSNNQVEKLVEAPVEFVREGTQFLAKCKKPDLKEYTKIVKAVGIGFIAVGIIGYAIKLIHIPIRYVIV.

Residues 1 to 46 (MARASEKGEEKKQSNNQVEKLVEAPVEFVREGTQFLAKCKKPDLKE) lie on the Cytoplasmic side of the membrane. Residues 47–75 (YTKIVKAVGIGFIAVGIIGYAIKLIHIPI) form a helical membrane-spanning segment. The Extracellular portion of the chain corresponds to 76 to 80 (RYVIV).

It belongs to the SecE/SEC61-gamma family. In terms of assembly, component of the heterotrimeric Sec61 complex, which is composed of SSH1, SBH1 and SSS1. Presumably three to four Sec61 heterotrimers assemble into an oligomeric ring with a central aqueous pore. In cotranslational ER import, the pore diameter varies from 9-15 A in a ribosome-free resting state to 40-60 A in a functional state when associated with the ribosome. The Sec61 complex is part of a channel-forming translocon complex whose composition seem to change dependent upon different functional states. During post-translational ER import the Sec61 complex associates with the Sec62/63 complex to form the Sec complex. SSH1 is a component of the heterotrimeric Ssh1 complex, which is composed of SSH1, SBH2 and SSS1. SSS1 interacts with OST1, OST4, SWP1 and WBP1, components of the OT complex.

The protein resides in the endoplasmic reticulum membrane. Its function is as follows. Part of the Sec61 complex, which is the major component of channel-forming translocon complex that mediates protein translocation across the endoplasmic reticulum (ER). The functional states of the translocon complex include co- and post-translational ER import, cotranslational membrane protein integration and retrograde transport of misfolded proteins out of the ER. In the cotranslational pathway, ribosomes synthesizing presecretory proteins are targeted to the translocon by the cytosolic signal recognition particle (SRP) and its ER-localized receptor. The association of the Sec61 complex with the ribosome is mediated by the 28S rRNA of the large ribosomal subunit. SRP-independent post-translational translocation requires the association of additional factors, such as the Sec62/63 complex and KAR2. Also part of the Ssh1 complex, which probably is the major component of a channel-forming translocon complex that may function exclusively in the cotranslational pathway of protein ER import. The sequence is that of Protein transport protein SSS1 (SSS1) from Saccharomyces cerevisiae (strain ATCC 204508 / S288c) (Baker's yeast).